A 286-amino-acid chain; its full sequence is 2-dehydro-3-deoxyphosphooctonate aldolase (286 aa).

The protein belongs to the KdsA family.

It is found in the cytoplasm. The enzyme catalyses D-arabinose 5-phosphate + phosphoenolpyruvate + H2O = 3-deoxy-alpha-D-manno-2-octulosonate-8-phosphate + phosphate. It functions in the pathway carbohydrate biosynthesis; 3-deoxy-D-manno-octulosonate biosynthesis; 3-deoxy-D-manno-octulosonate from D-ribulose 5-phosphate: step 2/3. It participates in bacterial outer membrane biogenesis; lipopolysaccharide biosynthesis. This Haemophilus ducreyi (strain 35000HP / ATCC 700724) protein is 2-dehydro-3-deoxyphosphooctonate aldolase.